Here is a 416-residue protein sequence, read N- to C-terminus: tRNA (guanine-N(7)-)-methyltransferase non-catalytic subunit wuho (416 aa).

Residues 47 to 88 (TQSQESCPATATSTTAGKEPGGKEQQLAKQPEEGGTSASGSV) form a disordered region. Polar residues predominate over residues 49–62 (SQESCPATATSTTA). 4 WD repeats span residues 89–130 (ATST…ARLL), 177–216 (GHLS…DIHS), 220–258 (GHRE…ELLQ), and 317–357 (AGSW…PTTN).

This sequence belongs to the WD repeat TRM82 family. As to quaternary structure, forms a heterodimer with the catalytic subunit Mettl1. Interacts with mei-P26 and weakly interacts with bgcn; required for the function or formation of the mei-P26-bgcn-bam-sxl complex. Interacts with nanos; may be involved in mei-P26-dependent derepression of the BMP signaling pathway. Interacts with Myc; the interaction may be mediated by mei-P26 and may be involved in the regulation of ribosome biogenesis. In terms of tissue distribution, in testis, it is present at high level in hub cells, a niche for germline stem cells of testis. Ubiquitously expressed in all testicular cells throughout spermatogenesis. Ubiquitously expressed in all germline and somatic cells of the ovary.

It localises to the nucleus. Its subcellular location is the cytoplasm. The protein operates within tRNA modification; N(7)-methylguanine-tRNA biosynthesis. Its function is as follows. Required for the Mettl1-dependent formation of N(7)-methylguanine at position 46 (m7G46) in tRNA. In the Mettl1-wuho methyltransferase complex, it is required to stabilize and induce conformational changes of the catalytic subunit. Required for binding of nanos mRNA and repression of translation by the mei-P26-bgcn-bam-sxl complex. May cooperate with mei-P26 and nanos to derepress the BMP signaling pathway. May cooperate with mei-P26 to suppress expression of a subset of microRNAs. May cooperate with mei-P26 to regulate bam expression levels in germline cells during gametogenesis. Required to promote mitosis to meiosis transition during gametogenesis. May regulate germline cell division in part by regulating ribosome biogenesis. The chain is tRNA (guanine-N(7)-)-methyltransferase non-catalytic subunit wuho from Drosophila erecta (Fruit fly).